Reading from the N-terminus, the 244-residue chain is AA9 family lytic polysaccharide monooxygenase B (244 aa).

The signal sequence occupies residues Met-1–Ala-19. His-20 is a Cu(2+) binding site. Tyr-39 provides a ligand contact to (1,4-beta-D-glucosyl)n. 2 disulfides stabilise this stretch: Cys-68–Cys-189 and Cys-111–Cys-115. Residue His-99 coordinates Cu(2+). Asn-152 carries an N-linked (GlcNAc...) asparagine glycan. 2 residues coordinate O2: His-178 and Gln-184. Position 186 (Tyr-186) interacts with Cu(2+). (1,4-beta-D-glucosyl)n-binding residues include Asp-224, Tyr-226, and Glu-229. N-linked (GlcNAc...) asparagine glycosylation is present at Asn-233.

This sequence belongs to the polysaccharide monooxygenase AA9 family. The cofactor is Cu(2+).

It localises to the secreted. The enzyme catalyses [(1-&gt;4)-beta-D-glucosyl]n+m + reduced acceptor + O2 = 4-dehydro-beta-D-glucosyl-[(1-&gt;4)-beta-D-glucosyl]n-1 + [(1-&gt;4)-beta-D-glucosyl]m + acceptor + H2O.. Functionally, lytic polysaccharide monooxygenase (LPMO) that depolymerizes crystalline and amorphous polysaccharides via the oxidation of scissile alpha- or beta-(1-4)-glycosidic bonds, yielding specifically C1 oxidation product. Catalysis by LPMOs requires the reduction of the active-site copper from Cu(II) to Cu(I) by a reducing agent and H(2)O(2) or O(2) as a cosubstrate. Displays catalytic activity on insoluble cellulose using I-beta microfibril model substrate. This Heterobasidion irregulare (strain TC 32-1) protein is AA9 family lytic polysaccharide monooxygenase B.